We begin with the raw amino-acid sequence, 192 residues long: Interleukin-18 (192 aa).

Positions 1-35 (MAAIPVDDCINFVGMKFIDNTLYFVADSDENLETD) are excised as a propeptide.

It belongs to the IL-1 family. As to quaternary structure, forms a ternary complex with ligand-binding receptor subunit IL18R1 and signaling receptor subunit IL18RAP at the plasma membrane. Mature IL18 first binds to IL18R1 forming a low affinity binary complex, which then interacts with IL18RAP to form a high affinity ternary complex that signals inside the cell. Interacts with cargo receptor TMED10; the interaction mediates the translocation from the cytoplasm into the ERGIC (endoplasmic reticulum-Golgi intermediate compartment) and thereby secretion. In terms of processing, the pro-IL-18 precursor is processed by CASP1, CASP4 or CASP5 to yield its mature, active form. The pro-IL-18 precursor features autoinhibitory interactions between the propeptide and the post-cleavage-site region, preventing recognition by the IL18R1 receptor. Processing by CASP1, CASP4 or CASP5 induces conformational changes to generate critical receptor-binding sites. The mature form is then secreted and released in the extracellular milieu by passing through the gasdermin-D (GSDMD) pore. In contrast, cleavage by CASP3 inactivates IL18.

Its subcellular location is the cytoplasm. The protein localises to the cytosol. It localises to the secreted. In terms of biological role, pro-inflammatory cytokine primarily involved in epithelial barrier repair, polarized T-helper 1 (Th1) cell and natural killer (NK) cell immune responses. Upon binding to IL18R1 and IL18RAP, forms a signaling ternary complex which activates NF-kappa-B, triggering synthesis of inflammatory mediators. Synergizes with IL12/interleukin-12 to induce IFNG synthesis from T-helper 1 (Th1) cells and natural killer (NK) cells. Involved in transduction of inflammation downstream of pyroptosis: its mature form is specifically released in the extracellular milieu by passing through the gasdermin-D (GSDMD) pore. This chain is Interleukin-18 (IL18), found in Felis catus (Cat).